The sequence spans 274 residues: Tail assembly protein Gp25 (274 aa).

The disordered stretch occupies residues Asn221–Ser250. Basic and acidic residues predominate over residues Pro236–Thr245.

It belongs to the L5likevirus tail assembly protein family. As to quaternary structure, interacts with tail assembly protein Gp24 and tape measure protein.

Promotes tail assembly by creating a scaffold for the tail tube proteins. The tail assembly proteins Gp24 and Gp25 would wrap the linear tape measure protein to create a tail assembly scaffold. It would allow polymerization of tail tube protein during which Gp24 and Gp25 are released and therefore are absent from the mature virion. The tail assembly protein Gp25 is produced by a rare -1 ribosomal frameshift. The ratio Gp24/Gp25 is important for proper tail assembly. The protein is Tail assembly protein Gp25 (25) of Mycobacterium phage D29 (Mycobacteriophage D29).